A 2176-amino-acid polypeptide reads, in one-letter code: Nipped-B-like protein scc-2 (2176 aa).

Over residues 1–25 (MDPNNLQNSLNGTGNPNFQPVQTNA) the composition is skewed to polar residues. Disordered regions lie at residues 1 to 27 (MDPN…NAGG), 150 to 170 (PIPQ…QIQS), 464 to 483 (SEAT…DEEG), 495 to 514 (MMSV…NQRK), 523 to 551 (YDSL…DDED), 585 to 615 (QHFF…IESR), and 669 to 708 (DSLD…EMDE). Low complexity predominate over residues 464–473 (SEATQSSSVT). 2 stretches are compositionally biased toward basic and acidic residues: residues 597–615 (EDRI…IESR) and 685–695 (SGGDHHHKGDE). Acidic residues predominate over residues 696 to 708 (NSDESDEEEEMDE). HEAT repeat units lie at residues 1280-1312 (DTYL…IIEA), 1320-1351 (EDVQ…FVLY), 1353-1388 (EEYV…ICEK), 1393-1426 (EMIP…LWFQ), 1692-1723 (EKVF…FCAQ), 1803-1834 (QKYW…TLNQ), and 1840-1871 (GASI…IDSK). The segment at 2149-2176 (ITAANDDYDEEEDGGEDSRGPIMEQMEH) is disordered. A compositionally biased stretch (acidic residues) spans 2154-2163 (DDYDEEEDGG).

It belongs to the SCC2/Nipped-B family. May heterodimerize with mau-2/SCC4 to form the cohesin loading complex.

It is found in the nucleus. Its subcellular location is the chromosome. Functionally, plays an important role in the loading of the cohesin complex on to meiotic chromosomes. Forms a heterodimeric complex (also known as cohesin loading complex) with mau-2/SCC4 which mediates the loading of the cohesin complex onto chromatin. Plays an essential role in cell division during embryonic development. Promotes normal chromosome organization during meiosis. Required for the assembly of the synaptonemal complex between homologous chromosomes to promote sister chromatid cohesion during meiosis. Required for chromosome segregation during mitosis and meiosis. Plays a role in DNA double-strand break (DSB) repair during meiotic recombination and promotes the assembly of the 9-1-1 cell-cycle checkpoint response complex which is required for inducing apoptosis in response to DNA damage, at DNA damage sites. This is Nipped-B-like protein scc-2 from Caenorhabditis elegans.